Reading from the N-terminus, the 367-residue chain is Chorismate synthase (367 aa).

Arg-48 is an NADP(+) binding site. FMN contacts are provided by residues 125-127, Gly-283, 298-302, and Arg-324; these read RSS and KPTPS.

It belongs to the chorismate synthase family. Homotetramer. Requires FMNH2 as cofactor.

The catalysed reaction is 5-O-(1-carboxyvinyl)-3-phosphoshikimate = chorismate + phosphate. The protein operates within metabolic intermediate biosynthesis; chorismate biosynthesis; chorismate from D-erythrose 4-phosphate and phosphoenolpyruvate: step 7/7. Functionally, catalyzes the anti-1,4-elimination of the C-3 phosphate and the C-6 proR hydrogen from 5-enolpyruvylshikimate-3-phosphate (EPSP) to yield chorismate, which is the branch point compound that serves as the starting substrate for the three terminal pathways of aromatic amino acid biosynthesis. This reaction introduces a second double bond into the aromatic ring system. This Agathobacter rectalis (strain ATCC 33656 / DSM 3377 / JCM 17463 / KCTC 5835 / VPI 0990) (Eubacterium rectale) protein is Chorismate synthase.